The chain runs to 311 residues: Ribosomal RNA small subunit methyltransferase H (311 aa).

S-adenosyl-L-methionine is bound by residues 32–34 (AGH), Asp-52, Phe-79, Asp-100, and Gln-107.

This sequence belongs to the methyltransferase superfamily. RsmH family.

It localises to the cytoplasm. The catalysed reaction is cytidine(1402) in 16S rRNA + S-adenosyl-L-methionine = N(4)-methylcytidine(1402) in 16S rRNA + S-adenosyl-L-homocysteine + H(+). Specifically methylates the N4 position of cytidine in position 1402 (C1402) of 16S rRNA. The chain is Ribosomal RNA small subunit methyltransferase H from Staphylococcus carnosus (strain TM300).